A 170-amino-acid chain; its full sequence is N-glycosidase R617 (170 aa).

Belongs to the YbiA family.

The enzyme catalyses 2,5-diamino-6-hydroxy-4-(5-phosphoribosylamino)-pyrimidine + H2O = 2,5,6-triamino-4-hydroxypyrimidine + D-ribose 5-phosphate. It catalyses the reaction 5-amino-6-(5-phospho-D-ribosylamino)uracil + H2O = 5,6-diaminouracil + D-ribose 5-phosphate. Functionally, catalyzes the hydrolysis of the N-glycosidic bond in the first two intermediates of riboflavin biosynthesis, which are highly reactive metabolites, yielding relatively innocuous products. Thus, can divert a surplus of harmful intermediates into relatively harmless products and pre-empt the damage these intermediates would otherwise do. May act on other substrates in vivo. The protein is N-glycosidase R617 of Acanthamoeba polyphaga mimivirus (APMV).